Here is a 393-residue protein sequence, read N- to C-terminus: Elongation factor Tu (393 aa).

The tr-type G domain occupies 10–203 (KPHVNIGTIG…AVDNYIPTPV (194 aa)). The G1 stretch occupies residues 19 to 26 (GHVDHGKT). 19 to 26 (GHVDHGKT) serves as a coordination point for GTP. Threonine 26 is a Mg(2+) binding site. A G2 region spans residues 60-64 (GITIS). A G3 region spans residues 81–84 (DCPG). GTP-binding positions include 81–85 (DCPGH) and 136–139 (NKVD). The tract at residues 136 to 139 (NKVD) is G4. Residues 173-175 (SAL) form a G5 region.

Belongs to the TRAFAC class translation factor GTPase superfamily. Classic translation factor GTPase family. EF-Tu/EF-1A subfamily. In terms of assembly, monomer.

Its subcellular location is the cytoplasm. The enzyme catalyses GTP + H2O = GDP + phosphate + H(+). Functionally, GTP hydrolase that promotes the GTP-dependent binding of aminoacyl-tRNA to the A-site of ribosomes during protein biosynthesis. The chain is Elongation factor Tu from Chloroherpeton thalassium (strain ATCC 35110 / GB-78).